Reading from the N-terminus, the 208-residue chain is Glutathione S-transferase P (208 aa).

One can recognise a GST N-terminal domain in the interval 1 to 78 (MTLKLTYFDI…HLARLNGLNG (78 aa)). Residues Tyr-7, Trp-38, Lys-42, 49 to 50 (QV), and 62 to 63 (QS) contribute to the glutathione site. The GST C-terminal domain maps to 80–202 (NETETTFIDM…NKRAAINPPV (123 aa)).

This sequence belongs to the GST superfamily. Pi family. Homodimer. As to expression, expressed in dopaminergic (DA) neuron (at protein levels).

It catalyses the reaction RX + glutathione = an S-substituted glutathione + a halide anion + H(+). In terms of biological role, conjugation of reduced glutathione to a wide number of exogenous and endogenous hydrophobic electrophiles. Prevents dopaminergic CEP neuron degeneration in response to Mn(2+). This chain is Glutathione S-transferase P (gst-1), found in Caenorhabditis elegans.